The chain runs to 495 residues: Heat stress transcription factor A-1a (495 aa).

The DNA-binding element occupies 50 to 144; sequence PPPFLSKTYD…LLKKISRRKS (95 aa). Positions 140 to 164 are disordered; sequence SRRKSVQGHGSSSSNPQSQQLSQGQ. Low complexity predominate over residues 146 to 164; the sequence is QGHGSSSSNPQSQQLSQGQ. The segment at 172–238 is hydrophobic repeat HR-A/B; it reads SCVEVGKFGL…QIMSFLAKAV (67 aa). The interval 255–288 is disordered; the sequence is NMHVTEANKKRRLREDSTAATESNSHSHSLEASD. The short motif at 262 to 268 is the Nuclear localization signal element; it reads NKKRRLR. A compositionally biased stretch (polar residues) spans 272–281; it reads TAATESNSHS. An AHA motif is present at residues 433-442; it reads FEFLEEYMPE. A disordered region spans residues 445–477; the sequence is VFGDATTLENNNNNNNNNNNNNNNNNNNNTNGR. Over residues 454-473 the composition is skewed to low complexity; sequence NNNNNNNNNNNNNNNNNNNN. The short motif at 482-489 is the Nuclear export signal element; it reads LIEELGLL.

This sequence belongs to the HSF family. Class A subfamily. As to quaternary structure, homotrimer. Interacts with HSP70-1 and HSP70-4. Binds to CRK1. Binds to HSBP. Exhibits temperature-dependent phosphorylation. Phosphorylated by CRK1. As to expression, constitutively expressed.

It localises to the cytoplasm. The protein resides in the nucleus. Transcriptional activator that specifically binds DNA sequence 5'-AGAAnnTTCT-3' known as heat shock promoter elements (HSE). The chain is Heat stress transcription factor A-1a (HSFA1A) from Arabidopsis thaliana (Mouse-ear cress).